The chain runs to 188 residues: Elongation factor P (188 aa).

It belongs to the elongation factor P family.

Its subcellular location is the cytoplasm. It participates in protein biosynthesis; polypeptide chain elongation. Functionally, involved in peptide bond synthesis. Stimulates efficient translation and peptide-bond synthesis on native or reconstituted 70S ribosomes in vitro. Probably functions indirectly by altering the affinity of the ribosome for aminoacyl-tRNA, thus increasing their reactivity as acceptors for peptidyl transferase. The polypeptide is Elongation factor P (Natranaerobius thermophilus (strain ATCC BAA-1301 / DSM 18059 / JW/NM-WN-LF)).